A 322-amino-acid polypeptide reads, in one-letter code: Cytochrome c biogenesis protein CcsA (322 aa).

8 helical membrane-spanning segments follow: residues Val17–Leu37, Gly44–Gly64, Leu71–Phe91, Leu98–Leu118, Met143–Ile163, Val225–Asn245, Glu258–His273, and Ala286–Leu306.

It belongs to the CcmF/CycK/Ccl1/NrfE/CcsA family. In terms of assembly, may interact with Ccs1.

The protein resides in the plastid. It is found in the chloroplast thylakoid membrane. In terms of biological role, required during biogenesis of c-type cytochromes (cytochrome c6 and cytochrome f) at the step of heme attachment. The protein is Cytochrome c biogenesis protein CcsA of Vitis vinifera (Grape).